A 372-amino-acid chain; its full sequence is Queuine tRNA-ribosyltransferase (372 aa).

D92 (proton acceptor) is an active-site residue. Residues 92–96 (DSGGY), D146, Q188, and G215 each bind substrate. Residues 246-252 (GIGSLKE) are RNA binding. The Nucleophile role is filled by D265. Residues 270–274 (TRLGR) form an RNA binding; important for wobble base 34 recognition region. Zn(2+)-binding residues include C303, C305, C308, and H334.

The protein belongs to the queuine tRNA-ribosyltransferase family. In terms of assembly, homodimer. Within each dimer, one monomer is responsible for RNA recognition and catalysis, while the other monomer binds to the replacement base PreQ1. Zn(2+) is required as a cofactor.

The enzyme catalyses 7-aminomethyl-7-carbaguanine + guanosine(34) in tRNA = 7-aminomethyl-7-carbaguanosine(34) in tRNA + guanine. The protein operates within tRNA modification; tRNA-queuosine biosynthesis. Catalyzes the base-exchange of a guanine (G) residue with the queuine precursor 7-aminomethyl-7-deazaguanine (PreQ1) at position 34 (anticodon wobble position) in tRNAs with GU(N) anticodons (tRNA-Asp, -Asn, -His and -Tyr). Catalysis occurs through a double-displacement mechanism. The nucleophile active site attacks the C1' of nucleotide 34 to detach the guanine base from the RNA, forming a covalent enzyme-RNA intermediate. The proton acceptor active site deprotonates the incoming PreQ1, allowing a nucleophilic attack on the C1' of the ribose to form the product. After dissociation, two additional enzymatic reactions on the tRNA convert PreQ1 to queuine (Q), resulting in the hypermodified nucleoside queuosine (7-(((4,5-cis-dihydroxy-2-cyclopenten-1-yl)amino)methyl)-7-deazaguanosine). The polypeptide is Queuine tRNA-ribosyltransferase (Prochlorococcus marinus (strain MIT 9301)).